Consider the following 311-residue polypeptide: Olfactory receptor 6C3 (311 aa).

At 1-22 (MNHTMVTEFVLLGLSDDPDLQI) the chain is on the extracellular side. Residue Asn-2 is glycosylated (N-linked (GlcNAc...) asparagine). The helical transmembrane segment at 23 to 43 (VIFLFLFITYILSVTGNLTII) threads the bilayer. The Cytoplasmic segment spans residues 44–51 (TLTFVDSH). The helical transmembrane segment at 52–72 (LQTPMYFFLRNFSFLEISFTT) threads the bilayer. At 73–96 (VCIPRFLGAIITRNKTISYNNCAA) the chain is on the extracellular side. The cysteines at positions 94 and 186 are disulfide-linked. The helical transmembrane segment at 97–117 (QLFFFIFMGVTEFYILTAMSY) threads the bilayer. Topologically, residues 118-136 (DRYVAICKPLHYTSIMNRK) are cytoplasmic. Residues 137–157 (LCTLLVLCAWLSGFLTIFPPL) form a helical membrane-spanning segment. Residues 158 to 194 (MLLLQLDYCASNVIDHFACDYFPLLQLSCSDTWLLEV) are Extracellular-facing. The chain crosses the membrane as a helical span at residues 195–214 (IGFYFALVTLLFTLALVILS). Residues 215–234 (YMYIIRTILRIPSASQRKKA) lie on the Cytoplasmic side of the membrane. The chain crosses the membrane as a helical span at residues 235 to 255 (FSTCSSHMIVISISYGSCIFM). Residues 256–268 (YANPSAKEKASLT) lie on the Extracellular side of the membrane. Residues 269–289 (KGIAILNTSVAPMLNPFIYTL) traverse the membrane as a helical segment. At 290-311 (RNQQVKQAFKNVVHKVVFYANQ) the chain is on the cytoplasmic side.

It belongs to the G-protein coupled receptor 1 family.

Its subcellular location is the cell membrane. Its function is as follows. Odorant receptor. This Homo sapiens (Human) protein is Olfactory receptor 6C3 (OR6C3).